A 140-amino-acid polypeptide reads, in one-letter code: Putative nickel-responsive regulator (140 aa).

Ni(2+) is bound by residues His-81, His-92, His-94, and Cys-100.

It belongs to the transcriptional regulatory CopG/NikR family. Requires Ni(2+) as cofactor.

In terms of biological role, transcriptional regulator. The protein is Putative nickel-responsive regulator of Methanothrix thermoacetophila (strain DSM 6194 / JCM 14653 / NBRC 101360 / PT) (Methanosaeta thermophila).